The primary structure comprises 236 residues: Uridylate kinase (236 aa).

10-13 (KLSG) is an ATP binding site. The tract at residues 18 to 23 (GEDGYG) is involved in allosteric activation by GTP. Gly52 is a binding site for UMP. Residues Gly53 and Arg57 each contribute to the ATP site. Residues Asp72 and 133-140 (TGNPYFTT) each bind UMP. ATP is bound by residues Thr160, Tyr166, and Asp169.

The protein belongs to the UMP kinase family. As to quaternary structure, homohexamer.

It localises to the cytoplasm. The enzyme catalyses UMP + ATP = UDP + ADP. It participates in pyrimidine metabolism; CTP biosynthesis via de novo pathway; UDP from UMP (UMPK route): step 1/1. With respect to regulation, allosterically activated by GTP. Inhibited by UTP. Catalyzes the reversible phosphorylation of UMP to UDP. In Chlorobium phaeobacteroides (strain DSM 266 / SMG 266 / 2430), this protein is Uridylate kinase.